The following is a 555-amino-acid chain: Hydroxylamine reductase (555 aa).

[4Fe-4S] cluster contacts are provided by Cys-3, Cys-6, Cys-18, and Cys-25. 8 residues coordinate hybrid [4Fe-2O-2S] cluster: His-252, Glu-276, Cys-320, Cys-407, Cys-435, Cys-460, Glu-494, and Lys-496. Cys-407 carries the cysteine persulfide modification.

This sequence belongs to the HCP family. The cofactor is [4Fe-4S] cluster. It depends on hybrid [4Fe-2O-2S] cluster as a cofactor.

It is found in the cytoplasm. The enzyme catalyses A + NH4(+) + H2O = hydroxylamine + AH2 + H(+). Its function is as follows. Catalyzes the reduction of hydroxylamine to form NH(3) and H(2)O. This Burkholderia ambifaria (strain MC40-6) protein is Hydroxylamine reductase.